We begin with the raw amino-acid sequence, 97 residues long: Co-chaperonin GroES (97 aa).

Belongs to the GroES chaperonin family. Heptamer of 7 subunits arranged in a ring. Interacts with the chaperonin GroEL.

It localises to the cytoplasm. Together with the chaperonin GroEL, plays an essential role in assisting protein folding. The GroEL-GroES system forms a nano-cage that allows encapsulation of the non-native substrate proteins and provides a physical environment optimized to promote and accelerate protein folding. GroES binds to the apical surface of the GroEL ring, thereby capping the opening of the GroEL channel. In Serratia proteamaculans (strain 568), this protein is Co-chaperonin GroES.